We begin with the raw amino-acid sequence, 588 residues long: Lamin-B1 (588 aa).

The span at 1 to 12 (MATATPVQQQRA) shows a compositional bias: polar residues. The interval 1-34 (MATATPVQQQRAGSRASAPATPLSPTRLSRLQEK) is disordered. Position 2 is an N-acetylalanine (A2). The segment at 2 to 35 (ATATPVQQQRAGSRASAPATPLSPTRLSRLQEKE) is head. Phosphothreonine is present on residues T3 and T5. At R15 the chain carries Omega-N-methylarginine. A Phosphoserine modification is found at S17. T21 carries the phosphothreonine modification. S24 is modified (phosphoserine). At T26 the chain carries Phosphothreonine. S29 carries the phosphoserine modification. Positions 33–389 (EKEELRELND…KLLEGEEERL (357 aa)) constitute an IF rod domain. The interval 36–70 (ELRELNDRLAVYIDKVRSLETENSALQLQVTEREE) is coil 1A. Positions 71–82 (VRGRELTGLKAL) are linker 1. The interval 83-216 (YETELADARR…EFRKNMYEEE (134 aa)) is coil 1B. K103 is covalently cross-linked (Glycyl lysine isopeptide (Lys-Gly) (interchain with G-Cter in SUMO2)). Position 112 is an N6-acetyllysine (K112). K124 participates in a covalent cross-link: Glycyl lysine isopeptide (Lys-Gly) (interchain with G-Cter in SUMO2). Residue S127 is modified to Phosphoserine. K146 participates in a covalent cross-link: Glycyl lysine isopeptide (Lys-Gly) (interchain with G-Cter in SUMO2). Residue K158 is modified to N6-acetyllysine; alternate. A Glycyl lysine isopeptide (Lys-Gly) (interchain with G-Cter in SUMO2); alternate cross-link involves residue K158. A Phosphoserine modification is found at S159. K182 is covalently cross-linked (Glycyl lysine isopeptide (Lys-Gly) (interchain with G-Cter in SUMO2)). Phosphoserine occurs at positions 201 and 233. Residues 217-244 (INETRRKHETRLVEVDSGRQIEYEYKLA) are linker 2. Residues K242 and K262 each participate in a glycyl lysine isopeptide (Lys-Gly) (interchain with G-Cter in SUMO2) cross-link. Residues 245-387 (QALHEMREQH…YRKLLEGEEE (143 aa)) form a coil 2 region. Position 272 is an N6-acetyllysine; alternate (K272). K272 is covalently cross-linked (Glycyl lysine isopeptide (Lys-Gly) (interchain with G-Cter in SUMO2); alternate). A phosphoserine mark is found at S279 and S303. A Glycyl lysine isopeptide (Lys-Gly) (interchain with G-Cter in SUMO2) cross-link involves residue K313. The residue at position 331 (K331) is an N6-acetyllysine; alternate. K331 is covalently cross-linked (Glycyl lysine isopeptide (Lys-Gly) (interchain with G-Cter in SUMO2); alternate). Phosphoserine is present on residues S376 and S394. The interval 388–588 (RLKLSPSPSS…RASNKSCAIM (201 aa)) is tail. The span at 391-410 (LSPSPSSRVTVSRASSSRSV) shows a compositional bias: low complexity. The segment at 391–433 (LSPSPSSRVTVSRASSSRSVRTTRGKRKRVDVEESEASSSVSI) is disordered. T400 is a glycosylation site (O-linked (GlcNAc) threonine). R414 is modified (omega-N-methylarginine). A Nuclear localization signal motif is present at residues 416–421 (KRKRVD). The 117-residue stretch at 431–547 (VSISHSASAT…EEVAQRSTVF (117 aa)) folds into the LTD domain. An N6-acetyllysine modification is found at K484. Residue K533 forms a Glycyl lysine isopeptide (Lys-Gly) (interchain with G-Cter in SUMO2) linkage. The residue at position 535 (S535) is a Phosphoserine. K548 participates in a covalent cross-link: Glycyl lysine isopeptide (Lys-Gly) (interchain with G-Cter in SUMO2). Position 585 is a cysteine methyl ester (C585). A lipid anchor (S-farnesyl cysteine) is attached at C585. A propeptide spans 586 to 588 (AIM) (removed in mature form).

This sequence belongs to the intermediate filament family. In terms of assembly, homodimer. Lamin dimers then assemble into dimeric head-to-tail polymers. Ultimately, two head-to-tail polymers assemble laterally into a protofilament with a uniformly shaped rod of 3.5 nm in diameter. Interacts with SPAG4 and SEPT12. In terms of processing, B-type lamins undergo a series of modifications, such as farnesylation and phosphorylation. Increased phosphorylation of the lamins occurs before envelope disintegration and probably plays a role in regulating lamin associations. Post-translationally, phosphorylation plays a key role in lamin organization, subcellular localization and nuclear envelope disintegration. Phosphorylation by CDK1 at Ser-24 and Ser-394 at the onset of mitosis drives lamin disassembly and nuclear envelope breakdown.

The protein resides in the nucleus lamina. Functionally, lamins are intermediate filament proteins that assemble into a filamentous meshwork, and which constitute the major components of the nuclear lamina, a fibrous layer on the nucleoplasmic side of the inner nuclear membrane. Lamins provide a framework for the nuclear envelope, bridging the nuclear envelope and chromatin, thereby playing an important role in nuclear assembly, chromatin organization, nuclear membrane and telomere dynamics. The structural integrity of the lamina is strictly controlled by the cell cycle, as seen by the disintegration and formation of the nuclear envelope in prophase and telophase, respectively. The sequence is that of Lamin-B1 (Lmnb1) from Mus musculus (Mouse).